The primary structure comprises 199 residues: Recombination protein RecR (199 aa).

The C4-type zinc finger occupies 57–72; the sequence is CSVCGNITEQDPCAIC. Positions 80 to 176 constitute a Toprim domain; sequence STIMVVEEAK…KVTRLAAGLA (97 aa).

This sequence belongs to the RecR family.

Its function is as follows. May play a role in DNA repair. It seems to be involved in an RecBC-independent recombinational process of DNA repair. It may act with RecF and RecO. This chain is Recombination protein RecR, found in Lactobacillus delbrueckii subsp. bulgaricus (strain ATCC BAA-365 / Lb-18).